A 540-amino-acid chain; its full sequence is Chaperonin GroEL 2 (540 aa).

ATP-binding positions include 30-33, lysine 51, 87-91, glycine 415, 480-482, and aspartate 496; these read TLGP, DGTTT, and NAL.

The protein belongs to the chaperonin (HSP60) family. As to quaternary structure, forms a cylinder of 14 subunits composed of two heptameric rings stacked back-to-back. Interacts with the co-chaperonin GroES.

It is found in the cytoplasm. It carries out the reaction ATP + H2O + a folded polypeptide = ADP + phosphate + an unfolded polypeptide.. Its function is as follows. Together with its co-chaperonin GroES, plays an essential role in assisting protein folding. The GroEL-GroES system forms a nano-cage that allows encapsulation of the non-native substrate proteins and provides a physical environment optimized to promote and accelerate protein folding. This is Chaperonin GroEL 2 from Protochlamydia amoebophila (strain UWE25).